We begin with the raw amino-acid sequence, 1057 residues long: Outer capsid protein VP2 (1057 aa).

It belongs to the orbivirus VP2 family.

The protein resides in the virion. The VP2 protein is one of the two proteins (with VP5) which constitute the virus particle outer capsid. It is the major target of the host immunogenic response. This chain is Outer capsid protein VP2 (Segment-2), found in Anas (ducks).